Consider the following 427-residue polypeptide: Serine--tRNA ligase (427 aa).

232–234 (TAE) is an L-serine binding site. 263–265 (RSE) lines the ATP pocket. L-serine is bound at residue E286. 350–353 (EISS) contacts ATP. Position 385 (S385) interacts with L-serine.

It belongs to the class-II aminoacyl-tRNA synthetase family. Type-1 seryl-tRNA synthetase subfamily. Homodimer. The tRNA molecule binds across the dimer.

The protein localises to the cytoplasm. It carries out the reaction tRNA(Ser) + L-serine + ATP = L-seryl-tRNA(Ser) + AMP + diphosphate + H(+). The catalysed reaction is tRNA(Sec) + L-serine + ATP = L-seryl-tRNA(Sec) + AMP + diphosphate + H(+). The protein operates within aminoacyl-tRNA biosynthesis; selenocysteinyl-tRNA(Sec) biosynthesis; L-seryl-tRNA(Sec) from L-serine and tRNA(Sec): step 1/1. In terms of biological role, catalyzes the attachment of serine to tRNA(Ser). Is also able to aminoacylate tRNA(Sec) with serine, to form the misacylated tRNA L-seryl-tRNA(Sec), which will be further converted into selenocysteinyl-tRNA(Sec). The protein is Serine--tRNA ligase of Lacticaseibacillus paracasei (strain ATCC 334 / BCRC 17002 / CCUG 31169 / CIP 107868 / KCTC 3260 / NRRL B-441) (Lactobacillus paracasei).